The primary structure comprises 224 residues: uncharacterized protein (224 aa).

One can recognise an HTH gntR-type domain in the interval 10–77; that stretch reads TPYYLQFYNQ…DRNGFSITSL (68 aa). The segment at residues 37–56 is a DNA-binding region (H-T-H motif); it reads ETQLAKSFGVSRSPIREAMR.

This is an uncharacterized protein from Bacillus subtilis (strain 168).